A 248-amino-acid polypeptide reads, in one-letter code: MTSHTLTSFGRQISSPVIVALDYDNQDTALAFADKIDPQDCRLKVGKEMFTLHGPQFVKLLHQRGFEVFLDLKFHDIPNTTARAVAAAAEMGVWMVNVHASGGTRMMTAAKEALLPYGHDAPLLIAVTVLTSMEQSDLQGIGIDMTPAQQAERLAKLTQACGLDGVVCSAHEAQQLKKVCGQHFQLVTPGIRPTGSDVGDQRRIMTPEQAVLAGVDYMVIGRPITRAADPAAALRQINQSIAGVINAR.

Residues D22, K44, 71-80, T131, R192, Q201, G221, and R222 contribute to the substrate site; that span reads DLKFHDIPNT. K73 acts as the Proton donor in catalysis.

It belongs to the OMP decarboxylase family. Type 1 subfamily. In terms of assembly, homodimer.

The enzyme catalyses orotidine 5'-phosphate + H(+) = UMP + CO2. Its pathway is pyrimidine metabolism; UMP biosynthesis via de novo pathway; UMP from orotate: step 2/2. Its function is as follows. Catalyzes the decarboxylation of orotidine 5'-monophosphate (OMP) to uridine 5'-monophosphate (UMP). This is Orotidine 5'-phosphate decarboxylase from Photorhabdus laumondii subsp. laumondii (strain DSM 15139 / CIP 105565 / TT01) (Photorhabdus luminescens subsp. laumondii).